The sequence spans 396 residues: Elongation factor Tu 1 (396 aa).

Residues Lys-10–Glu-206 form the tr-type G domain. The segment at Gly-19 to Thr-26 is G1. Gly-19 to Thr-26 serves as a coordination point for GTP. Thr-26 is a Mg(2+) binding site. Residues Gly-60–Asn-64 are G2. A G3 region spans residues Asp-81–Gly-84. Residues Asp-81–His-85 and Asn-136–Asp-139 each bind GTP. The tract at residues Asn-136–Asp-139 is G4. The G5 stretch occupies residues Ser-174 to Lys-176.

This sequence belongs to the TRAFAC class translation factor GTPase superfamily. Classic translation factor GTPase family. EF-Tu/EF-1A subfamily. In terms of assembly, monomer.

Its subcellular location is the cytoplasm. The enzyme catalyses GTP + H2O = GDP + phosphate + H(+). Its function is as follows. GTP hydrolase that promotes the GTP-dependent binding of aminoacyl-tRNA to the A-site of ribosomes during protein biosynthesis. This chain is Elongation factor Tu 1, found in Methylobacillus flagellatus (strain ATCC 51484 / DSM 6875 / VKM B-1610 / KT).